The chain runs to 125 residues: Small ribosomal subunit protein uS12 (125 aa).

Positions 1 to 30 are disordered; that stretch reads MPTISQLVRKPRAAKPLKSKVPALGNSPQK. Positions 9–18 are enriched in basic residues; the sequence is RKPRAAKPLK. The residue at position 89 (Asp-89) is a 3-methylthioaspartic acid. Residues 103-125 form a disordered region; the sequence is DTAGVKDRKQGRSKYGAKKPKSA. A compositionally biased stretch (basic residues) spans 113–125; it reads GRSKYGAKKPKSA.

Belongs to the universal ribosomal protein uS12 family. As to quaternary structure, part of the 30S ribosomal subunit. Contacts proteins S8 and S17. May interact with IF1 in the 30S initiation complex.

Its function is as follows. With S4 and S5 plays an important role in translational accuracy. Interacts with and stabilizes bases of the 16S rRNA that are involved in tRNA selection in the A site and with the mRNA backbone. Located at the interface of the 30S and 50S subunits, it traverses the body of the 30S subunit contacting proteins on the other side and probably holding the rRNA structure together. The combined cluster of proteins S8, S12 and S17 appears to hold together the shoulder and platform of the 30S subunit. This Nitrosospira multiformis (strain ATCC 25196 / NCIMB 11849 / C 71) protein is Small ribosomal subunit protein uS12.